The sequence spans 397 residues: Pyridinium-3,5-bisthiocarboxylic acid mononucleotide nickel insertion protein (397 aa).

It belongs to the LarC family.

The enzyme catalyses Ni(II)-pyridinium-3,5-bisthiocarboxylate mononucleotide = pyridinium-3,5-bisthiocarboxylate mononucleotide + Ni(2+). In terms of biological role, involved in the biosynthesis of a nickel-pincer cofactor ((SCS)Ni(II) pincer complex). Binds Ni(2+), and functions in nickel delivery to pyridinium-3,5-bisthiocarboxylic acid mononucleotide (P2TMN), to form the mature cofactor. Is thus probably required for the activation of nickel-pincer cofactor-dependent enzymes. The protein is Pyridinium-3,5-bisthiocarboxylic acid mononucleotide nickel insertion protein of Thermotoga petrophila (strain ATCC BAA-488 / DSM 13995 / JCM 10881 / RKU-1).